Reading from the N-terminus, the 294-residue chain is Protoheme IX farnesyltransferase (294 aa).

The next 9 membrane-spanning stretches (helical) occupy residues 24 to 44 (VVLLMLLTVIVGMYLAAPGWV), 48 to 68 (LIAFTLLGIGLCAGSAAAINH), 96 to 116 (ALWFAVIIGLMGLSLLILFVN), 118 to 138 (LTALLTFVTLIGYAGVYTGYL), 146 to 166 (IVIGGLAGAAPPLLGWTAVTG), 172 to 192 (ALLLVLIIFTWTPPHFWALAI), 224 to 244 (VLLLVVSLLPFVVSMSGWIYL), 245 to 265 (LGALVLGIRFLVWAHKLYFTD), and 268 to 288 (VVAMQTFRFSILYLMLLFVFL).

The protein belongs to the UbiA prenyltransferase family. Protoheme IX farnesyltransferase subfamily.

The protein localises to the cell inner membrane. The catalysed reaction is heme b + (2E,6E)-farnesyl diphosphate + H2O = Fe(II)-heme o + diphosphate. It participates in porphyrin-containing compound metabolism; heme O biosynthesis; heme O from protoheme: step 1/1. In terms of biological role, converts heme B (protoheme IX) to heme O by substitution of the vinyl group on carbon 2 of heme B porphyrin ring with a hydroxyethyl farnesyl side group. The chain is Protoheme IX farnesyltransferase from Legionella pneumophila (strain Paris).